The following is a 538-amino-acid chain: Phosphoenolpyruvate carboxykinase (ATP) (538 aa).

Residues Arg64, Tyr205, and Lys211 each coordinate substrate. Residues Lys211, His230, and 246 to 254 (GLSGTGKTT) contribute to the ATP site. Mn(2+)-binding residues include Lys211 and His230. Residue Asp267 coordinates Mn(2+). ATP is bound by residues Glu295, Arg331, 447 to 448 (RI), and Thr453. Arg331 is a substrate binding site.

The protein belongs to the phosphoenolpyruvate carboxykinase (ATP) family. Monomer. The cofactor is Mn(2+).

The protein localises to the cytoplasm. It catalyses the reaction oxaloacetate + ATP = phosphoenolpyruvate + ADP + CO2. It functions in the pathway carbohydrate biosynthesis; gluconeogenesis. Functionally, involved in the gluconeogenesis. Catalyzes the conversion of oxaloacetate (OAA) to phosphoenolpyruvate (PEP) through direct phosphoryl transfer between the nucleoside triphosphate and OAA. This chain is Phosphoenolpyruvate carboxykinase (ATP), found in Haemophilus influenzae (strain 86-028NP).